The chain runs to 187 residues: Putative manganese efflux pump MntP (187 aa).

Helical transmembrane passes span 3 to 23, 41 to 61, 62 to 82, 106 to 128, 142 to 162, and 167 to 187; these read LSAT…ASIG, LIFG…GLLA, TQFV…FLGG, LLVT…LAFL, ATLI…PLLG, and ILGG…HFAG.

This sequence belongs to the MntP (TC 9.B.29) family.

It is found in the cell inner membrane. In terms of biological role, probably functions as a manganese efflux pump. The protein is Putative manganese efflux pump MntP of Cronobacter sakazakii (strain ATCC BAA-894) (Enterobacter sakazakii).